A 330-amino-acid polypeptide reads, in one-letter code: Mucin-15 (330 aa).

The signal sequence occupies residues methionine 1–glycine 23. The tract at residues glycine 23–phenylalanine 115 is disordered. At glutamate 24–threonine 232 the chain is on the extracellular side. Asparagine 30, asparagine 44, asparagine 54, asparagine 71, asparagine 79, asparagine 89, asparagine 94, asparagine 122, asparagine 138, asparagine 147, asparagine 154, asparagine 162, asparagine 175, asparagine 214, and asparagine 221 each carry an N-linked (GlcNAc...) asparagine glycan. Polar residues predominate over residues methionine 42–threonine 56. Over residues phenylalanine 86 to phenylalanine 115 the composition is skewed to polar residues. Residues serine 164–glutamate 185 are disordered. The helical transmembrane segment at glycine 233–glycine 253 threads the bilayer. Topologically, residues tyrosine 254–valine 330 are cytoplasmic. The segment at leucine 279–valine 330 is disordered. The span at phenylalanine 292–glycine 310 shows a compositional bias: polar residues.

Post-translationally, highly glycosylated (N- and O-linked carbohydrates). As to expression, mainly expressed on apical surfaces of the mammary epithelial cells.

The protein localises to the cell membrane. The protein resides in the secreted. The protein is Mucin-15 (MUC15) of Bos taurus (Bovine).